A 125-amino-acid polypeptide reads, in one-letter code: Large ribosomal subunit protein bL19 (125 aa).

This sequence belongs to the bacterial ribosomal protein bL19 family.

This protein is located at the 30S-50S ribosomal subunit interface and may play a role in the structure and function of the aminoacyl-tRNA binding site. The polypeptide is Large ribosomal subunit protein bL19 (Ehrlichia chaffeensis (strain ATCC CRL-10679 / Arkansas)).